Reading from the N-terminus, the 517-residue chain is Cytochrome P450 monooxygenase stcB (517 aa).

C461 serves as a coordination point for heme.

This sequence belongs to the cytochrome P450 family. Requires heme as cofactor.

Its pathway is mycotoxin biosynthesis; sterigmatocystin biosynthesis. In terms of biological role, cytochrome P450 monooxygenase; part of the gene cluster that mediates the biosynthesis of sterigmatocystin (ST), a polyketide-derived furanocoumarin which is part of the most toxic and carcinogenic compounds among the known mycotoxins. The first step in the biosynthesis of sterigmatocystin is the production of hexanoate by the fatty acid synthase (FAS) units stcJ and stcK. The polyketide backbone is assembled by the non-reducing polyketide synthase stcA by condensation of the starter hexanoyl-CoA and 7 malonyl-CoA extender units followed by cyclization and release of norsolorinic acid. Norsolorinic acid is the first stable intermediate in the biosynthesis of sterigmatocystin and is converted into averantin (AVN) by the ketoreductase stcE which reduces the hexanoate ketone to an alcohol. Averantin is then oxidized into 5'-hydroxyaverantin (HAVN) by the cytochrome P450 monooxygenase stcF. 5'-hydroxyaverantin is further converted to 5'-oxyaverantin (OAVN) by the 5'-hydroxyaverantin dehydrogenase stcG. The next step is the conversion of OAVN into averufin (AVF) which is catalyzed by a yet to be identified enzyme. The cytochrome P450 monooxygenase stcB and the flavin-binding monooxygenase stcW are both required for the conversion of averufin to 1-hydroxyversicolorone. The esterase stcI probably catalyzes the formation of versiconal hemiacetal acetate from 1-hydroxyversicolorone. The oxydoreductase stcN then probably catalyzes the biosynthetic step from versiconal to versicolorin B (VERB). The next step is performed by the versicolorin B desaturase stcL to produce versicolorin A (VERA). The ketoreductase stcU and the cytochrome P450 monooxygenase stcS are involved in the conversion of versicolorin A to demethylsterigmatocystin. The Baeyer-Villiger oxidas stcQ and the reductase stcR might be involved in the biosynthetic step from versicolorin A to demethylsterigmatocystin. The final step in the biosynthesis of sterigmatocystin is the methylation of demethylsterigmatocystin catalyzed by the methyltransferase stcP. This chain is Cytochrome P450 monooxygenase stcB, found in Emericella nidulans (strain FGSC A4 / ATCC 38163 / CBS 112.46 / NRRL 194 / M139) (Aspergillus nidulans).